Consider the following 150-residue polypeptide: Phosphoribosyl-AMP cyclohydrolase (150 aa).

D93 serves as a coordination point for Mg(2+). C94 serves as a coordination point for Zn(2+). Residues D95 and D97 each coordinate Mg(2+). C112 and C119 together coordinate Zn(2+).

It belongs to the PRA-CH family. In terms of assembly, homodimer. It depends on Mg(2+) as a cofactor. Requires Zn(2+) as cofactor.

Its subcellular location is the cytoplasm. The catalysed reaction is 1-(5-phospho-beta-D-ribosyl)-5'-AMP + H2O = 1-(5-phospho-beta-D-ribosyl)-5-[(5-phospho-beta-D-ribosylamino)methylideneamino]imidazole-4-carboxamide. It participates in amino-acid biosynthesis; L-histidine biosynthesis; L-histidine from 5-phospho-alpha-D-ribose 1-diphosphate: step 3/9. Its function is as follows. Catalyzes the hydrolysis of the adenine ring of phosphoribosyl-AMP. In Rhizobium etli (strain CIAT 652), this protein is Phosphoribosyl-AMP cyclohydrolase.